The primary structure comprises 220 residues: Deoxyribose-phosphate aldolase (220 aa).

The Proton donor/acceptor role is filled by Asp92. Lys155 (schiff-base intermediate with acetaldehyde) is an active-site residue. The Proton donor/acceptor role is filled by Lys184.

The protein belongs to the DeoC/FbaB aldolase family. DeoC type 1 subfamily.

It is found in the cytoplasm. The enzyme catalyses 2-deoxy-D-ribose 5-phosphate = D-glyceraldehyde 3-phosphate + acetaldehyde. The protein operates within carbohydrate degradation; 2-deoxy-D-ribose 1-phosphate degradation; D-glyceraldehyde 3-phosphate and acetaldehyde from 2-deoxy-alpha-D-ribose 1-phosphate: step 2/2. Catalyzes a reversible aldol reaction between acetaldehyde and D-glyceraldehyde 3-phosphate to generate 2-deoxy-D-ribose 5-phosphate. The polypeptide is Deoxyribose-phosphate aldolase (Symbiobacterium thermophilum (strain DSM 24528 / JCM 14929 / IAM 14863 / T)).